Consider the following 1249-residue polypeptide: Voltage-dependent calcium channel unc-36 (1249 aa).

An N-terminal signal peptide occupies residues 1–19 (MRVVHLLVVLATYVSTTSS). The Extracellular portion of the chain corresponds to 20 to 1228 (FNKESIKECA…SENERRPCST (1209 aa)). N-linked (GlcNAc...) asparagine glycans are attached at residues asparagine 100, asparagine 140, asparagine 146, asparagine 302, asparagine 520, asparagine 558, asparagine 757, asparagine 838, asparagine 903, asparagine 923, and asparagine 1130. Residues 250–479 (NVLIMLDMSG…EKIHHYIRRM (230 aa)) form the VWFA domain. The chain crosses the membrane as a helical span at residues 1229-1248 (SPTIVSIFQILFGVFLHFCI). Residue phenylalanine 1249 is a topological domain, cytoplasmic.

As to expression, decendants of the cells AB and AB.p (that give rise to nearly all non-pharyngeal neurons), decendants of P1 (that give rise to body muscle) and cell lineages that give rise to the adult and juvenile motor neurons. Expressed in body wall, vulval muscle and pharyngeal muscle.

Its subcellular location is the membrane. Its function is as follows. May act as an auxiliary subunit of the unc-2 voltage-gated calcium channel which appears to trigger calcium-activated signaling pathways that control the serotonin response. Inhibiting serotonin sensitivity of the vulval muscles results in egg laying defects. May act in both neurons and muscle cells to enhance motor activity as it is required for coordinated movement. Has a role in neural depolarization-induced calcium influx and pharyngeal pumping. Involved in restricting the expression of the putative olfactory receptor str-2 to only one of the two AWC neurons. The polypeptide is Voltage-dependent calcium channel unc-36 (unc-36) (Caenorhabditis elegans).